Here is a 348-residue protein sequence, read N- to C-terminus: NADH-ubiquinone oxidoreductase chain 2 (348 aa).

9 helical membrane-spanning segments follow: residues 13–33 (VGLG…WMGL), 60–80 (FLTQ…NAWM), 93–113 (IAST…PMHF), 149–169 (IDPL…GWGG), 178–197 (ILAY…IQYA), 202–219 (LIAL…FLTL), 246–266 (LVLL…KWLI), 274–294 (DLPI…YFYL), and 326–346 (LALF…ILML).

This sequence belongs to the complex I subunit 2 family.

The protein resides in the mitochondrion inner membrane. It catalyses the reaction a ubiquinone + NADH + 5 H(+)(in) = a ubiquinol + NAD(+) + 4 H(+)(out). Core subunit of the mitochondrial membrane respiratory chain NADH dehydrogenase (Complex I) that is believed to belong to the minimal assembly required for catalysis. Complex I functions in the transfer of electrons from NADH to the respiratory chain. The immediate electron acceptor for the enzyme is believed to be ubiquinone. This is NADH-ubiquinone oxidoreductase chain 2 (MT-ND2) from Cyprinus carpio (Common carp).